The following is a 364-amino-acid chain: Fructose-bisphosphate aldolase C (364 aa).

Y5 is modified (phosphotyrosine). S36, S39, and S45 each carry phosphoserine. R56 contacts substrate. Position 111 is an N6-acetyllysine (K111). S132 bears the Phosphoserine mark. Substrate is bound at residue K147. The Proton acceptor role is filled by E188. The active-site Schiff-base intermediate with dihydroxyacetone-P is the K230.

It belongs to the class I fructose-bisphosphate aldolase family. Homotetramer. Interacts with ATP6V1E1.

It catalyses the reaction beta-D-fructose 1,6-bisphosphate = D-glyceraldehyde 3-phosphate + dihydroxyacetone phosphate. It participates in carbohydrate degradation; glycolysis; D-glyceraldehyde 3-phosphate and glycerone phosphate from D-glucose: step 4/4. The chain is Fructose-bisphosphate aldolase C (ALDOC) from Pan troglodytes (Chimpanzee).